The following is a 262-amino-acid chain: uncharacterized protein (262 aa).

The 65-residue stretch at 6–70 (LRINQFLAHY…LKNKKFSVLV (65 aa)) folds into the S4 RNA-binding domain. Asp108 serves as the catalytic Nucleophile.

This sequence belongs to the pseudouridine synthase RsuA family.

It carries out the reaction a uridine in RNA = a pseudouridine in RNA. This is an uncharacterized protein from Helicobacter pylori (strain J99 / ATCC 700824) (Campylobacter pylori J99).